Here is a 400-residue protein sequence, read N- to C-terminus: tRNA(Met) cytidine acetate ligase (400 aa).

ATP is bound by residues 7–20, Gly-101, Asn-159, and 184–185; these read IVEY…HLYH and RI.

The protein belongs to the TmcAL family.

It localises to the cytoplasm. The catalysed reaction is cytidine(34) in elongator tRNA(Met) + acetate + ATP = N(4)-acetylcytidine(34) in elongator tRNA(Met) + AMP + diphosphate. In terms of biological role, catalyzes the formation of N(4)-acetylcytidine (ac(4)C) at the wobble position of elongator tRNA(Met), using acetate and ATP as substrates. First activates an acetate ion to form acetyladenylate (Ac-AMP) and then transfers the acetyl group to tRNA to form ac(4)C34. This chain is tRNA(Met) cytidine acetate ligase, found in Caldicellulosiruptor bescii (strain ATCC BAA-1888 / DSM 6725 / KCTC 15123 / Z-1320) (Anaerocellum thermophilum).